Reading from the N-terminus, the 142-residue chain is Biogenesis of lysosome-related organelles complex 1 subunit 2 (142 aa).

Residues 1-33 (MAAAAEGVLATRSDEPARDDAAVETAEEAKEPA) form a disordered region. Ala-2 carries the N-acetylalanine modification. The segment covering 12–33 (RSDEPARDDAAVETAEEAKEPA) has biased composition (basic and acidic residues). Residues 79–127 (EMKDIAINISRNLKDLNQKYAGLQPYLDQINVIEEQVAALEQAAYKLDA) are a coiled coil.

It belongs to the BLOC1S2 family. Component of the biogenesis of lysosome-related organelles complex 1 (BLOC-1) composed of BLOC1S1, BLOC1S2, BLOC1S3, BLOC1S4, BLOC1S5, BLOC1S6, DTNBP1/BLOC1S7 and SNAPIN/BLOC1S8. Octamer composed of one copy each BLOC1S1, BLOC1S2, BLOC1S3, BLOC1S4, BLOC1S5, BLOC1S6, DTNBP1/BLOC1S7 and SNAPIN/BLOC1S8. Interacts directly with BLOC1S1, BLOC1S3, BLOC1S4, BLOC1S5 and SNAPIN. The BLOC-1 complex associates with the AP-3 protein complex and membrane protein cargos. Component of the BLOC-one-related complex (BORC) which is composed of BLOC1S1, BLOC1S2, BORCS5, BORCS6, BORCS7, BORCS8, KXD1 and SNAPIN. Interacts with gamma-tubulin. Interacts with IFT57. Isoform 1 and isoform 2 are widely expressed. Expressed in various malignant tumor tissues (at protein level).

The protein localises to the cytoplasm. It localises to the cytoskeleton. Its subcellular location is the microtubule organizing center. The protein resides in the centrosome. It is found in the lysosome membrane. Functionally, component of the BLOC-1 complex, a complex that is required for normal biogenesis of lysosome-related organelles (LRO), such as platelet dense granules and melanosomes. In concert with the AP-3 complex, the BLOC-1 complex is required to target membrane protein cargos into vesicles assembled at cell bodies for delivery into neurites and nerve terminals. The BLOC-1 complex, in association with SNARE proteins, is also proposed to be involved in neurite extension. As part of the BORC complex may play a role in lysosomes movement and localization at the cell periphery. Associated with the cytosolic face of lysosomes, the BORC complex may recruit ARL8B and couple lysosomes to microtubule plus-end-directed kinesin motor. May play a role in cell proliferation. In Homo sapiens (Human), this protein is Biogenesis of lysosome-related organelles complex 1 subunit 2 (BLOC1S2).